A 350-amino-acid chain; its full sequence is MSNPSLVRSNWTRKEVEALFALPFNDLLFEAQTIHRQFFNANEVQVSTLCSIKTGACPEDCAYCPQSARYDTGLEREKLMAVEKVLEEAKAAKDSGATRFCMGAAWRSPKKKDMPYVTAMVKGVKEMGLEACMTLGMIDKDQATELAEAGLDYYNHNLDTSPEYYGDIITTRTYQDRLDTLDNVRHAGMKVCCGGIMGMGEDESDRVGLLLQLANMPQHPESVPINMLVAVEGTPLEQQEALDPFDFIRTIAVARILMPQSHVRLSAGREDMNDQTQALAFHAGANSIFYGEKLLTTANPESNKDMQLFKRLGINPEKREEHKTEQEQVEQINQQVAEAALDKVFYNAAS.

A Radical SAM core domain is found at 42 to 269 (NEVQVSTLCS…QSHVRLSAGR (228 aa)). Residues C57, C61, and C64 each coordinate [4Fe-4S] cluster. [2Fe-2S] cluster-binding residues include C101, C132, C192, and R264.

Belongs to the radical SAM superfamily. Biotin synthase family. In terms of assembly, homodimer. The cofactor is [4Fe-4S] cluster. [2Fe-2S] cluster is required as a cofactor.

The catalysed reaction is (4R,5S)-dethiobiotin + (sulfur carrier)-SH + 2 reduced [2Fe-2S]-[ferredoxin] + 2 S-adenosyl-L-methionine = (sulfur carrier)-H + biotin + 2 5'-deoxyadenosine + 2 L-methionine + 2 oxidized [2Fe-2S]-[ferredoxin]. Its pathway is cofactor biosynthesis; biotin biosynthesis; biotin from 7,8-diaminononanoate: step 2/2. Catalyzes the conversion of dethiobiotin (DTB) to biotin by the insertion of a sulfur atom into dethiobiotin via a radical-based mechanism. This is Biotin synthase from Saccharophagus degradans (strain 2-40 / ATCC 43961 / DSM 17024).